The primary structure comprises 150 residues: Large ribosomal subunit protein bL9 (150 aa).

This sequence belongs to the bacterial ribosomal protein bL9 family.

Binds to the 23S rRNA. This chain is Large ribosomal subunit protein bL9, found in Pectobacterium atrosepticum (strain SCRI 1043 / ATCC BAA-672) (Erwinia carotovora subsp. atroseptica).